We begin with the raw amino-acid sequence, 30 residues long: Cycloviolacin-H4 (30 aa).

The segment at residues 1–30 (GIPCAESCVWIPCTVTALLGCSCSNNVCYN) is a cross-link (cyclopeptide (Gly-Asn)). Cystine bridges form between C4–C21, C8–C23, and C13–C28.

In terms of processing, this is a cyclic peptide.

Probably participates in a plant defense mechanism. Has potent hemolytic activity. This Viola hederacea (Australian violet) protein is Cycloviolacin-H4.